A 96-amino-acid polypeptide reads, in one-letter code: Guanyl-specific ribonuclease Sa (96 aa).

A disulfide bridge connects residues C7 and C96. The active-site Proton acceptor is the E54. The active-site Proton donor is H85.

This sequence belongs to the ribonuclease N1/T1 family.

It is found in the secreted. It carries out the reaction [RNA] containing guanosine + H2O = an [RNA fragment]-3'-guanosine-3'-phosphate + a 5'-hydroxy-ribonucleotide-3'-[RNA fragment].. The protein is Guanyl-specific ribonuclease Sa (rnaSA) of Kitasatospora aureofaciens (Streptomyces aureofaciens).